A 540-amino-acid polypeptide reads, in one-letter code: Na(+)/H(+) antiporter NhaS2 (540 aa).

10 helical membrane-spanning segments follow: residues 29-49 (ITTL…VALV), 71-91 (GLSV…ILIF), 117-137 (VVIS…LAWV), 138-158 (TAAG…IAAF), 207-227 (IFVA…LCVG), 256-276 (LGVS…NLAL), 296-316 (FGVN…SILL), 323-343 (LIAI…LLYL), 358-378 (VLIA…ALPL), and 389-409 (LVFS…PWVV).

It belongs to the monovalent cation:proton antiporter 1 (CPA1) transporter (TC 2.A.36) family.

It is found in the cell membrane. In terms of biological role, required for Na(+) uptake into the cell, especially at low external Na(+) concentrations or low Na(+)/K(+) ratios. May be part of a sodium cycle that permits re-entry of sodium into the cell. The protein is Na(+)/H(+) antiporter NhaS2 (nhaS2) of Synechocystis sp. (strain ATCC 27184 / PCC 6803 / Kazusa).